We begin with the raw amino-acid sequence, 153 residues long: 6,7-dimethyl-8-ribityllumazine synthase (153 aa).

Residues Trp-22, 56–58 (SYE), and 80–82 (AVI) contribute to the 5-amino-6-(D-ribitylamino)uracil site. 85-86 (AT) contributes to the (2S)-2-hydroxy-3-oxobutyl phosphate binding site. Residue His-88 is the Proton donor of the active site. Leu-113 provides a ligand contact to 5-amino-6-(D-ribitylamino)uracil. Arg-127 is a (2S)-2-hydroxy-3-oxobutyl phosphate binding site.

This sequence belongs to the DMRL synthase family.

The enzyme catalyses (2S)-2-hydroxy-3-oxobutyl phosphate + 5-amino-6-(D-ribitylamino)uracil = 6,7-dimethyl-8-(1-D-ribityl)lumazine + phosphate + 2 H2O + H(+). It functions in the pathway cofactor biosynthesis; riboflavin biosynthesis; riboflavin from 2-hydroxy-3-oxobutyl phosphate and 5-amino-6-(D-ribitylamino)uracil: step 1/2. In terms of biological role, catalyzes the formation of 6,7-dimethyl-8-ribityllumazine by condensation of 5-amino-6-(D-ribitylamino)uracil with 3,4-dihydroxy-2-butanone 4-phosphate. This is the penultimate step in the biosynthesis of riboflavin. This chain is 6,7-dimethyl-8-ribityllumazine synthase, found in Herpetosiphon aurantiacus (strain ATCC 23779 / DSM 785 / 114-95).